Here is a 203-residue protein sequence, read N- to C-terminus: Holliday junction branch migration complex subunit RuvA (203 aa).

The tract at residues 1–64 (MIGRLRGIIL…EDAQLLYGFN (64 aa)) is domain I. Residues 65-142 (NKQERTLFKE…KGLHGDLFTP (78 aa)) form a domain II region. Positions 143 to 154 (AVDLVLTSPASP) are flexible linker. The segment at 155–203 (GSEDAEQEAVAALVALGYKPQEASRMVSKIARPDASSETLIRDALRAAL) is domain III.

The protein belongs to the RuvA family. Homotetramer. Forms an RuvA(8)-RuvB(12)-Holliday junction (HJ) complex. HJ DNA is sandwiched between 2 RuvA tetramers; dsDNA enters through RuvA and exits via RuvB. An RuvB hexamer assembles on each DNA strand where it exits the tetramer. Each RuvB hexamer is contacted by two RuvA subunits (via domain III) on 2 adjacent RuvB subunits; this complex drives branch migration. In the full resolvosome a probable DNA-RuvA(4)-RuvB(12)-RuvC(2) complex forms which resolves the HJ.

It localises to the cytoplasm. The RuvA-RuvB-RuvC complex processes Holliday junction (HJ) DNA during genetic recombination and DNA repair, while the RuvA-RuvB complex plays an important role in the rescue of blocked DNA replication forks via replication fork reversal (RFR). RuvA specifically binds to HJ cruciform DNA, conferring on it an open structure. The RuvB hexamer acts as an ATP-dependent pump, pulling dsDNA into and through the RuvAB complex. HJ branch migration allows RuvC to scan DNA until it finds its consensus sequence, where it cleaves and resolves the cruciform DNA. This chain is Holliday junction branch migration complex subunit RuvA, found in Salmonella schwarzengrund (strain CVM19633).